Consider the following 326-residue polypeptide: Organic solute transporter subunit alpha (326 aa).

The Extracellular portion of the chain corresponds to 1–28 (METSNFTLFDPRCRAEAPFAIDAIKQLD). Residue asparagine 5 is glycosylated (N-linked (GlcNAc...) asparagine). The helical transmembrane segment at 29 to 49 (IFGKVLYTVLTLMATASMLVF) threads the bilayer. Residues 50 to 67 (IEECIYIYKKVPAHKKST) are Cytoplasmic-facing. A helical membrane pass occupies residues 68–88 (IIWVTGVAPVMAIMSCLGMWV). Topologically, residues 89–99 (PRATMFTDMTS) are extracellular. A helical membrane pass occupies residues 100–120 (ATYFAIVVFKFLILMIEEVGG). At 121 to 161 (DNAFLRRCEKQTFKISTGPCCCCCPCLPNVPITRRSLFILK) the chain is on the cytoplasmic side. Residues 162 to 182 (LGSYQFALMKLVLTIFSIVLW) traverse the membrane as a helical segment. Residues 183–198 (TNGSFSLTNVSASGAA) lie on the Extracellular side of the membrane. N-linked (GlcNAc...) asparagine glycans are attached at residues asparagine 184 and asparagine 191. A helical membrane pass occupies residues 199–219 (IWINSFIGVLTIIALWPVAIM). Residues 220–237 (FMHVREALRTLKIVPKYA) are Cytoplasmic-facing. The chain crosses the membrane as a helical span at residues 238–258 (MYQLVLILSQLQTAIINILAL). The N-linked (GlcNAc...) asparagine glycan is linked to asparagine 259. At 259 to 275 (NGTIACSPPYSSQARGY) the chain is on the extracellular side. The helical transmembrane segment at 276 to 296 (MMSQQLLIVEMFIITLVTRVL) threads the bilayer. Residues 297-326 (YRRQYEPIPEPDDVEEKKTVLSSKKAIDVA) lie on the Cytoplasmic side of the membrane.

It belongs to the OST-alpha family. In terms of assembly, interacts with slc51b. The Ost-alpha/Ost-beta complex is a heterodimer composed of alpha (slc51a) and beta (slc51b) subunit.

Its subcellular location is the cell membrane. It localises to the endoplasmic reticulum membrane. It catalyses the reaction taurocholate(out) = taurocholate(in). It carries out the reaction prostaglandin E2(out) = prostaglandin E2(in). The enzyme catalyses estrone 3-sulfate(out) = estrone 3-sulfate(in). The catalysed reaction is dehydroepiandrosterone 3-sulfate(out) = dehydroepiandrosterone 3-sulfate(in). It catalyses the reaction tauroursodeoxycholate(out) = tauroursodeoxycholate(in). It carries out the reaction glycoursodeoxycholate(out) = glycoursodeoxycholate(in). The enzyme catalyses glycocholate(out) = glycocholate(in). The catalysed reaction is taurochenodeoxycholate(out) = taurochenodeoxycholate(in). It catalyses the reaction glycochenodeoxycholate(out) = glycochenodeoxycholate(in). It carries out the reaction taurodeoxycholate(out) = taurodeoxycholate(in). The enzyme catalyses glycodeoxycholate(out) = glycodeoxycholate(in). Functionally, essential component of the Ost-alpha/Ost-beta complex, a heterodimer that acts as the intestinal basolateral transporter responsible for the translocation of bile acids (such as taurocholate), steroids (such as estrone sulfate), and eicosanoids (such as prostaglandin E2). This chain is Organic solute transporter subunit alpha (slc51a), found in Danio rerio (Zebrafish).